Here is a 454-residue protein sequence, read N- to C-terminus: Serine/threonine-protein phosphatase C23G10.1 (454 aa).

Residues aspartate 196, histidine 198, aspartate 224, and asparagine 256 each contribute to the Mn(2+) site. Catalysis depends on histidine 257, which acts as the Proton donor. Residues histidine 308 and histidine 382 each coordinate Mn(2+).

Belongs to the PPP phosphatase family. PP-1 subfamily. The cofactor is Mn(2+).

The enzyme catalyses O-phospho-L-seryl-[protein] + H2O = L-seryl-[protein] + phosphate. It catalyses the reaction O-phospho-L-threonyl-[protein] + H2O = L-threonyl-[protein] + phosphate. The polypeptide is Serine/threonine-protein phosphatase C23G10.1 (Caenorhabditis elegans).